Reading from the N-terminus, the 904-residue chain is Putative pentatricopeptide repeat-containing protein At1g19290 (904 aa).

PPR repeat units lie at residues 154–188 (SPTVFDMILKVYAEKGLVKNALHVFDNMGNYGRIP), 189–223 (SLLSCNSLLSNLVRKGENFVALHVYDQMISFEVSP), 224–254 (DVFTCSIVVNAYCRSGNVDKAMVFAKETESS), 260–294 (NVVTYNSLINGYAMIGDVEGMTRVLRLMSERGVSR), 295–329 (NVVTYTSLIKGYCKKGLMEEAEHVFELLKEKKLVA), 330–364 (DQHMYGVLMDGYCRTGQIRDAVRVHDNMIEIGVRT), 365–399 (NTTICNSLINGYCKSGQLVEAEQIFSRMNDWSLKP), 400–434 (DHHTYNTLVDGYCRAGYVDEALKLCDQMCQKEVVP), 435–469 (TVMTYNILLKGYSRIGAFHDVLSLWKMMLKRGVNA), 470–504 (DEISCSTLLEALFKLGDFNEAMKLWENVLARGLLT), 505–539 (DTITLNVMISGLCKMEKVNEAKEILDNVNIFRCKP), 540–574 (AVQTYQALSHGYYKVGNLKEAFAVKEYMERKGIFP), 575–609 (TIEMYNTLISGAFKYRHLNKVADLVIELRARGLTP), 610–644 (TVATYGALITGWCNIGMIDKAYATCFEMIEKGITL), 645–679 (NVNICSKIANSLFRLDKIDEACLLLQKIVDFDLLL), 718–753 (NNIVYNVAIAGLCKAGKLEDARKLFSDLLSSDRFIP), 754–788 (DEYTYTILIHGCAIAGDINKAFTLRDEMALKGIIP), 789–823 (NIVTYNALIKGLCKLGNVDRAQRLLHKLPQKGITP), and 824–858 (NAITYNTLIDGLVKSGNVAEAMRLKEKMIEKGLVR).

It belongs to the PPR family. P subfamily.

This is Putative pentatricopeptide repeat-containing protein At1g19290 from Arabidopsis thaliana (Mouse-ear cress).